Consider the following 137-residue polypeptide: Nucleoside diphosphate kinase (137 aa).

ATP-binding residues include Lys-9, Phe-57, Arg-85, Thr-91, Arg-102, and Asn-112. His-115 (pros-phosphohistidine intermediate) is an active-site residue.

The protein belongs to the NDK family. In terms of assembly, homotetramer. Mg(2+) is required as a cofactor.

The protein localises to the cytoplasm. It carries out the reaction a 2'-deoxyribonucleoside 5'-diphosphate + ATP = a 2'-deoxyribonucleoside 5'-triphosphate + ADP. The catalysed reaction is a ribonucleoside 5'-diphosphate + ATP = a ribonucleoside 5'-triphosphate + ADP. Functionally, major role in the synthesis of nucleoside triphosphates other than ATP. The ATP gamma phosphate is transferred to the NDP beta phosphate via a ping-pong mechanism, using a phosphorylated active-site intermediate. In Thermus thermophilus (strain ATCC 27634 / DSM 579 / HB8), this protein is Nucleoside diphosphate kinase.